A 149-amino-acid chain; its full sequence is L-alanine exporter AlaE (149 aa).

Helical transmembrane passes span phenylalanine 17 to methionine 37, leucine 43 to phenylalanine 63, leucine 86 to alanine 106, and isoleucine 111 to tyrosine 131.

It belongs to the AlaE exporter family.

The protein resides in the cell inner membrane. Functionally, exports L-alanine. The chain is L-alanine exporter AlaE from Aliivibrio salmonicida (strain LFI1238) (Vibrio salmonicida (strain LFI1238)).